Reading from the N-terminus, the 188-residue chain is MAAELEGSKALGGLLSGLAQEAFHGHHGITEELLRSQLYPEVSLEEFRPFLAKMRGILKSIASADMDFNQLEAFLTAQTKKQGGITSDQAAVISKFWKNHKTKIRESLMNQSRWDSGLRGLSWRVDGKSQSRHSAQIHTPVAIMELEIGKSGQESEFLCLEFDEVKVSQLLKKLSEVEESISTLMQPA.

The segment at 1 to 122 (MAAELEGSKA…RWDSGLRGLS (122 aa)) is sufficient for interaction with SLC12A2. The Cu cation site is built by His-100, Met-109, and His-133. Residues 117–185 (GLRGLSWRVD…EVEESISTLM (69 aa)) enclose the COMM domain. Residues 124 to 188 (RVDGKSQSRH…ESISTLMQPA (65 aa)) form a required for binding to PtdIns(4,5)P2 region.

This sequence belongs to the COMM domain-containing protein 1 family. Component of the commander complex consisting of the CCC subcomplex and the retriever subcomplex. Component of the CCC (COMMD/CCDC22/CCDC93) subcomplex consisting of COMMD1, COMMD2, COMMD3, COMMD4, COMMD5, COMMD6, COMMD7, COMMD8, COMMD9, COMMD10, CCDC22 and CCDC93; within the complex forms a heterodimer with COMMD6. Interacts with VPS35L; the interaction associates the CCC complex with the retriever complex. Identified in a complex with an E3 ubiquitin ligase complex composed of TCEB1/elongin C, CUL2, SOCS1 and RBX1; in the complex interacts directly with SOCS1 and CUL2. Identified in a complex with NF-kappa-B. Interacts directly with SLC12A2. Interacts directly with ATP7B (via the N-terminal region). Interacts with ATP7A. Interacts with FAM107A; this interaction stabilizes COMMD1 in the nucleus. Interacts with CCS, CDKN2A, RELA, REL, RELB, NFKB1/p105, NFKB2/p100, NFKBIB, SCNN1D, SCNN1B, CFTR, CLU, SGK1, AKT1, CUL1, CUL2, CUL3, CUL4A, CUL4B, CUL5, CUL7, HIF1A. In terms of processing, ubiquitinated; undergoes both 'Lys-63'- and 'Lys-48'-linked polyubiquitination. Ubiquitinated by XIAP, leading to its proteasomal degradation.

It is found in the nucleus. The protein resides in the cytoplasm. Its subcellular location is the endosome membrane. The protein localises to the cytoplasmic vesicle. It localises to the early endosome. It is found in the recycling endosome. Functionally, scaffold protein in the commander complex that is essential for endosomal recycling of transmembrane cargos; the commander complex is composed of the CCC subcomplex and the retriever subcomplex. Can modulate activity of cullin-RING E3 ubiquitin ligase (CRL) complexes by displacing CAND1; in vitro promotes CRL E3 activity and dissociates CAND1 from CUL1 and CUL2. Promotes ubiquitination of NF-kappa-B subunit RELA and its subsequent proteasomal degradation. Down-regulates NF-kappa-B activity. Involved in the regulation of membrane expression and ubiquitination of SLC12A2. Modulates Na(+) transport in epithelial cells by regulation of apical cell surface expression of amiloride-sensitive sodium channel (ENaC) subunits and by promoting their ubiquitination presumably involving NEDD4L. Promotes the localization of SCNN1D to recycling endosomes. Promotes CFTR cell surface expression through regulation of its ubiquitination. Down-regulates SOD1 activity by interfering with its homodimerization. Plays a role in copper ion homeostasis. Involved in copper-dependent ATP7A trafficking between the trans-Golgi network and vesicles in the cell periphery; the function is proposed to depend on its association within the CCC complex and cooperation with the WASH complex on early endosomes. Can bind one copper ion per monomer. May function to facilitate biliary copper excretion within hepatocytes. Binds to phosphatidylinositol 4,5-bisphosphate (PtdIns(4,5)P2). Involved in the regulation of HIF1A-mediated transcription; competes with ARNT/Hif-1-beta for binding to HIF1A resulting in decreased DNA binding and impaired transcriptional activation by HIF-1. Negatively regulates neuroblastoma G1/S phase cell cycle progression and cell proliferation by stimulating ubiquitination of NF-kappa-B subunit RELA and NF-kappa-B degradation in a FAM107A- and actin-dependent manner. The polypeptide is COMM domain-containing protein 1 (COMMD1) (Canis lupus familiaris (Dog)).